Reading from the N-terminus, the 899-residue chain is Translation initiation factor IF-2 (899 aa).

Disordered stretches follow at residues 116 to 135 (AKAR…ARLQ), 170 to 189 (RGGG…EQKK), and 262 to 306 (DREI…ANKH). A tr-type G domain is found at 399 to 568 (TRPPVVTIMG…LIQSELMELK (170 aa)). The interval 408–415 (GHVDHGKT) is G1. 408 to 415 (GHVDHGKT) lines the GTP pocket. A G2 region spans residues 433-437 (GITQH). Positions 454–457 (DTPG) are G3. GTP contacts are provided by residues 454 to 458 (DTPGH) and 508 to 511 (NKMD). The tract at residues 508–511 (NKMD) is G4. The tract at residues 544-546 (SAH) is G5.

Belongs to the TRAFAC class translation factor GTPase superfamily. Classic translation factor GTPase family. IF-2 subfamily.

Its subcellular location is the cytoplasm. Functionally, one of the essential components for the initiation of protein synthesis. Protects formylmethionyl-tRNA from spontaneous hydrolysis and promotes its binding to the 30S ribosomal subunits. Also involved in the hydrolysis of GTP during the formation of the 70S ribosomal complex. In Acinetobacter baumannii (strain AB307-0294), this protein is Translation initiation factor IF-2.